An 85-amino-acid polypeptide reads, in one-letter code: ATP synthase subunit c (85 aa).

Helical transmembrane passes span 10–30 (IAVG…FALL) and 53–73 (FIIA…ALLF).

This sequence belongs to the ATPase C chain family. As to quaternary structure, F-type ATPases have 2 components, F(1) - the catalytic core - and F(0) - the membrane proton channel. F(1) has five subunits: alpha(3), beta(3), gamma(1), delta(1), epsilon(1). F(0) has three main subunits: a(1), b(2) and c(10-14). The alpha and beta chains form an alternating ring which encloses part of the gamma chain. F(1) is attached to F(0) by a central stalk formed by the gamma and epsilon chains, while a peripheral stalk is formed by the delta and b chains.

It is found in the cell inner membrane. F(1)F(0) ATP synthase produces ATP from ADP in the presence of a proton or sodium gradient. F-type ATPases consist of two structural domains, F(1) containing the extramembraneous catalytic core and F(0) containing the membrane proton channel, linked together by a central stalk and a peripheral stalk. During catalysis, ATP synthesis in the catalytic domain of F(1) is coupled via a rotary mechanism of the central stalk subunits to proton translocation. Functionally, key component of the F(0) channel; it plays a direct role in translocation across the membrane. A homomeric c-ring of between 10-14 subunits forms the central stalk rotor element with the F(1) delta and epsilon subunits. This Aliivibrio fischeri (strain ATCC 700601 / ES114) (Vibrio fischeri) protein is ATP synthase subunit c.